We begin with the raw amino-acid sequence, 286 residues long: Puff II/9-2 protein (286 aa).

The signal sequence occupies residues 1 to 19 (MKQFIVLTVVLLAIQELQG). Positions 61 to 235 (IDGLKKENNI…EKDLNTLRCE (175 aa)) are helical. Asparagine 156 carries an N-linked (GlcNAc...) asparagine glycan.

The chain is Puff II/9-2 protein (II/9-2) from Bradysia coprophila (Dark-winged fungus gnat).